The chain runs to 222 residues: 3-dehydroquinate dehydratase (222 aa).

3-dehydroquinate contacts are provided by residues 32 to 34 (ELR) and Arg64. Residue His117 is the Proton donor/acceptor of the active site. The Schiff-base intermediate with substrate role is filled by Lys143. Arg181 contacts 3-dehydroquinate.

The protein belongs to the type-I 3-dehydroquinase family. Homodimer.

The catalysed reaction is 3-dehydroquinate = 3-dehydroshikimate + H2O. It functions in the pathway metabolic intermediate biosynthesis; chorismate biosynthesis; chorismate from D-erythrose 4-phosphate and phosphoenolpyruvate: step 3/7. Functionally, involved in the third step of the chorismate pathway, which leads to the biosynthesis of aromatic amino acids. Catalyzes the cis-dehydration of 3-dehydroquinate (DHQ) and introduces the first double bond of the aromatic ring to yield 3-dehydroshikimate. This is 3-dehydroquinate dehydratase from Aeropyrum pernix (strain ATCC 700893 / DSM 11879 / JCM 9820 / NBRC 100138 / K1).